The chain runs to 430 residues: Adenylosuccinate synthetase (430 aa).

Residues 12-18 (GDEGKGK) and 40-42 (GHT) each bind GTP. D13 functions as the Proton acceptor in the catalytic mechanism. Positions 13 and 40 each coordinate Mg(2+). IMP is bound by residues 13-16 (DEGK), 38-41 (NAGH), T128, R142, Q223, T238, and R302. The Proton donor role is filled by H41. Residue 298 to 304 (TTTGRPR) participates in substrate binding. GTP-binding positions include R304, 330-332 (LLD), and 412-414 (SVG).

It belongs to the adenylosuccinate synthetase family. In terms of assembly, homodimer. Mg(2+) serves as cofactor.

The protein resides in the cytoplasm. The catalysed reaction is IMP + L-aspartate + GTP = N(6)-(1,2-dicarboxyethyl)-AMP + GDP + phosphate + 2 H(+). Its pathway is purine metabolism; AMP biosynthesis via de novo pathway; AMP from IMP: step 1/2. Plays an important role in the de novo pathway of purine nucleotide biosynthesis. Catalyzes the first committed step in the biosynthesis of AMP from IMP. This chain is Adenylosuccinate synthetase, found in Listeria monocytogenes serotype 4b (strain CLIP80459).